A 181-amino-acid chain; its full sequence is Major urinary protein 11 (181 aa).

A signal peptide spans 1–19 (MKMLLLLLCLGLTLVCVHA). C83 and C176 are oxidised to a cystine.

This sequence belongs to the calycin superfamily. Lipocalin family.

It is found in the secreted. Functionally, major urinary proteins (Mups) bind pheromones, and thus stabilize them to allow slow release into the air from urine marks. May protect pheromones from oxidation. May also act as pheromones themselves. In this context, they play a role in the regulation of social behaviors, such as aggression, mating, pup-suckling, territory establishment and dominance. Binds the pheromone analog 2-sec-butyl-4,5-dihydrothiazole (SBT) in vitro. This Mus musculus (Mouse) protein is Major urinary protein 11.